The primary structure comprises 176 residues: NAD(P)H-quinone oxidoreductase subunit 6, chloroplastic (176 aa).

Transmembrane regions (helical) follow at residues 10-30 (FLLV…VLLP), 32-52 (PIFS…LYIL), 61-81 (AQLL…VMFM), 92-112 (LWTV…FSLI), and 152-172 (FFLP…GAIS).

This sequence belongs to the complex I subunit 6 family. As to quaternary structure, NDH is composed of at least 16 different subunits, 5 of which are encoded in the nucleus.

The protein localises to the plastid. It localises to the chloroplast thylakoid membrane. It catalyses the reaction a plastoquinone + NADH + (n+1) H(+)(in) = a plastoquinol + NAD(+) + n H(+)(out). The enzyme catalyses a plastoquinone + NADPH + (n+1) H(+)(in) = a plastoquinol + NADP(+) + n H(+)(out). NDH shuttles electrons from NAD(P)H:plastoquinone, via FMN and iron-sulfur (Fe-S) centers, to quinones in the photosynthetic chain and possibly in a chloroplast respiratory chain. The immediate electron acceptor for the enzyme in this species is believed to be plastoquinone. Couples the redox reaction to proton translocation, and thus conserves the redox energy in a proton gradient. This is NAD(P)H-quinone oxidoreductase subunit 6, chloroplastic (ndhG) from Lobularia maritima (Sweet alyssum).